Here is a 1568-residue protein sequence, read N- to C-terminus: Plexin-C1 (1568 aa).

The N-terminal stretch at 1-34 (MEVSRRKAPPRPPRPAAPLPLLAYLLALAAPGRG) is a signal peptide. Residues 35 to 452 (ADEPVWRSEQ…AGKEVRRIRV (418 aa)) enclose the Sema domain. Topologically, residues 35–944 (ADEPVWRSEQ…YVEQESVPST (910 aa)) are extracellular. A disulfide bridge connects residues cysteine 64 and cysteine 87. 3 N-linked (GlcNAc...) asparagine glycosylation sites follow: asparagine 86, asparagine 141, and asparagine 149. Intrachain disulfides connect cysteine 156-cysteine 194, cysteine 226-cysteine 354, and cysteine 283-cysteine 329. N-linked (GlcNAc...) asparagine glycosylation is found at asparagine 241 and asparagine 252. N-linked (GlcNAc...) asparagine glycosylation is found at asparagine 386 and asparagine 407. Disulfide bonds link cysteine 455–cysteine 472, cysteine 461–cysteine 506, cysteine 464–cysteine 481, and cysteine 475–cysteine 487. N-linked (GlcNAc...) asparagine glycans are attached at residues asparagine 548, asparagine 582, asparagine 653, asparagine 692, asparagine 771, asparagine 796, asparagine 821, asparagine 871, and asparagine 890. The helical transmembrane segment at 945-965 (WYFLIVLPVLLVIVIFAAVGV) threads the bilayer. The Cytoplasmic segment spans residues 966–1568 (TRHKSKELSR…FDEKKKCKWM (603 aa)). Position 978 is a phosphoserine (serine 978).

This sequence belongs to the plexin family. In terms of assembly, monomer. Homodimer. Interacts with SEMA7A. Post-translationally, N-glycosylated. Detected in heart, brain, lung, spleen and placenta.

It is found in the membrane. In terms of biological role, receptor for SEMA7A, for smallpox semaphorin A39R, vaccinia virus semaphorin A39R and for herpesvirus Sema protein. Binding of semaphorins triggers cellular responses leading to the rearrangement of the cytoskeleton and to secretion of IL6 and IL8. This chain is Plexin-C1 (PLXNC1), found in Homo sapiens (Human).